Here is a 357-residue protein sequence, read N- to C-terminus: Putative ABC transporter ATP-binding protein MG303 (357 aa).

An ABC transporter domain is found at 72 to 312 (LFFNNISVFV…TSWLMQYGIT (241 aa)). 107 to 114 (GESGSGKT) contacts ATP.

The protein belongs to the ABC transporter superfamily.

In Mycoplasma genitalium (strain ATCC 33530 / DSM 19775 / NCTC 10195 / G37) (Mycoplasmoides genitalium), this protein is Putative ABC transporter ATP-binding protein MG303.